The sequence spans 140 residues: L-fucose mutarotase (140 aa).

Histidine 22 (proton donor) is an active-site residue. Substrate is bound by residues aspartate 30, arginine 107, and 129-131 (YGN).

It belongs to the RbsD / FucU family. FucU mutarotase subfamily. As to quaternary structure, homodecamer.

It is found in the cytoplasm. The catalysed reaction is alpha-L-fucose = beta-L-fucose. Its pathway is carbohydrate metabolism; L-fucose metabolism. Involved in the anomeric conversion of L-fucose. The protein is L-fucose mutarotase of Salmonella typhimurium (strain LT2 / SGSC1412 / ATCC 700720).